Consider the following 366-residue polypeptide: MAEAPAGRALFEIYDEGFDSPSWGGVETALWHLSRSLREAGTEAEFYRSSEGADLDALAARVERDRVDAVFPLVESDLFEGAAWRRLPALHARTVRVWHDVSRLSADLSAPPPCPVHARVPALPGAPVAEGCPARGAHPEGPMREVFLGEWPWTRCFPRRSVIPWAADHVPAKDLCDPSGPVVLQLGKIDTVDAERCLRRLTGAGVALRVVFATWSRRGREARELVRAHQGAGRRVEVLDAYDIRTDWERVFGGASLFLLPSVFHETYNFAAAEAVQLGVPVAALGEGGNLPRFASLTAPTPDALVDRLLAGGGAVAPRPRPAAGWRDVAARYAEVIREHPAAGAGPAVPAGAGEGRGGREEEHGG.

Residues 342-352 are compositionally biased toward low complexity; it reads AAGAGPAVPAG. The tract at residues 342–366 is disordered; that stretch reads AAGAGPAVPAGAGEGRGGREEEHGG. A compositionally biased stretch (basic and acidic residues) spans 357 to 366; the sequence is RGGREEEHGG.

The protein belongs to the glycosyltransferase group 1 family. Glycosyltransferase 4 subfamily. A divalent metal cation is required as a cofactor.

It catalyses the reaction ribostamycin + UDP-N-acetyl-alpha-D-glucosamine = 2'''-acetyl-6'''-hydroxyneomycin C + UDP + H(+). Its pathway is antibiotic biosynthesis; neomycin biosynthesis. In terms of biological role, glycosyltransferase involved in the biosynthesis of neomycin by mediating glycosylation of ribostamycin with UDP-GlcNAc as a sugar donor to generate 2'''-acetyl-6'''-hydroxyneomycin C. This is UDP-GlcNAc:ribostamycin N-acetylglucosaminyltransferase (neoK) from Streptomyces fradiae (Streptomyces roseoflavus).